We begin with the raw amino-acid sequence, 396 residues long: L-lactate dehydrogenase (396 aa).

The region spanning 1–380 (MIISAASDYR…TQDSLVQVLG (380 aa)) is the FMN hydroxy acid dehydrogenase domain. Tyr-24 serves as a coordination point for substrate. 2 residues coordinate FMN: Ser-106 and Gln-127. A substrate-binding site is contributed by Tyr-129. Residue Thr-155 coordinates FMN. Arg-164 provides a ligand contact to substrate. Lys-251 provides a ligand contact to FMN. His-275 acts as the Proton acceptor in catalysis. Position 278 (Arg-278) interacts with substrate. 306–330 (DSGIRNGLDVVRMIALGADTVLLGR) serves as a coordination point for FMN.

This sequence belongs to the FMN-dependent alpha-hydroxy acid dehydrogenase family. The cofactor is FMN.

It localises to the cell inner membrane. It carries out the reaction (S)-lactate + A = pyruvate + AH2. Its function is as follows. Catalyzes the conversion of L-lactate to pyruvate. Is coupled to the respiratory chain. The polypeptide is L-lactate dehydrogenase (Escherichia coli O45:K1 (strain S88 / ExPEC)).